The primary structure comprises 78 residues: Alpha-neurotoxin homolog 7 (78 aa).

Positions 1–21 are cleaved as a signal peptide; sequence MKTLLLTLVVVTIVCLDFGYT. Intrachain disulfides connect cysteine 24–cysteine 42, cysteine 37–cysteine 57, cysteine 59–cysteine 70, and cysteine 71–cysteine 76.

It belongs to the three-finger toxin family. Short-chain subfamily. Orphan group XII sub-subfamily. As to expression, expressed by the venom gland.

The protein resides in the secreted. The chain is Alpha-neurotoxin homolog 7 from Micrurus corallinus (Brazilian coral snake).